Reading from the N-terminus, the 204-residue chain is Carbon disulfide hydrolase (204 aa).

Zn(2+)-binding residues include C35, H88, and C91.

Belongs to the beta-class carbonic anhydrase family. Forms a hexadecameric catenane homooligomer, through interactions of two interlocked octameric rings. Exists as both octamers and hexadecamers in solution. Zn(2+) is required as a cofactor.

The enzyme catalyses carbon disulfide + 2 H2O = 2 hydrogen sulfide + CO2 + 2 H(+). It participates in sulfur metabolism; hydrogen sulfide biosynthesis. Its function is as follows. Catalyzes the conversion of carbon disulfide into hydrogen sulfide and carbon dioxide, with carbonyl sulfide as an intermediate. Likely plays a key role in sulfur metabolism that allows Acidianus sp. A1-3 to grow on carbon disulfide as the main carbon and energy source. Does not show carbonic anhydrase activity (hydration of CO(2) to carbonate). This Acidianus sp. (strain A1-3) protein is Carbon disulfide hydrolase.